We begin with the raw amino-acid sequence, 56 residues long: uncharacterized protein (56 aa).

Residues 2–22 (ILYIIVAISILLNIILGIKVI) traverse the membrane as a helical segment.

It is found in the membrane. This is an uncharacterized protein from Methanocaldococcus jannaschii (strain ATCC 43067 / DSM 2661 / JAL-1 / JCM 10045 / NBRC 100440) (Methanococcus jannaschii).